The sequence spans 235 residues: Phosphoribosylaminoimidazole-succinocarboxamide synthase (235 aa).

The protein belongs to the SAICAR synthetase family.

It catalyses the reaction 5-amino-1-(5-phospho-D-ribosyl)imidazole-4-carboxylate + L-aspartate + ATP = (2S)-2-[5-amino-1-(5-phospho-beta-D-ribosyl)imidazole-4-carboxamido]succinate + ADP + phosphate + 2 H(+). It participates in purine metabolism; IMP biosynthesis via de novo pathway; 5-amino-1-(5-phospho-D-ribosyl)imidazole-4-carboxamide from 5-amino-1-(5-phospho-D-ribosyl)imidazole-4-carboxylate: step 1/2. The chain is Phosphoribosylaminoimidazole-succinocarboxamide synthase from Streptococcus thermophilus (strain CNRZ 1066).